Here is a 237-residue protein sequence, read N- to C-terminus: N-(5'-phosphoribosyl)anthranilate isomerase (237 aa).

The protein belongs to the TrpF family.

The enzyme catalyses N-(5-phospho-beta-D-ribosyl)anthranilate = 1-(2-carboxyphenylamino)-1-deoxy-D-ribulose 5-phosphate. The protein operates within amino-acid biosynthesis; L-tryptophan biosynthesis; L-tryptophan from chorismate: step 3/5. The sequence is that of N-(5'-phosphoribosyl)anthranilate isomerase (TRP1) from Komagataella pastoris (Yeast).